Here is a 374-residue protein sequence, read N- to C-terminus: MEKFRNAFIEFYELSKKYLENSTGQKVYEVNYDNDIDSFLTVFPILESKIGGDINCAMSDETVILAMQQVEFKMFTFWYMRSAANVKSMLNKITDKETKEQFIRIFKDMLVYAKVITSINNMYSNMKKDTNEIVQDLKKILGIVSLIKSANNEHQAYKILMENNSFIIRTINKVLADSNYIIKIIALFNTDVVSDKIKLEEYKDVFSFSKENVIFGIKCFCDITIDGIDQINNKYVSFFKKVLPNIILFQTSCVKTTQFVNIFSKLSSIVYSEILTNERLHVLFSEIMASFKTKVSVEDLKKRKVNNIQGLISEISNNREMYKNIFVEEYEKHKTTLISIVQCITDNYNINYKENAVDIEFIFDFIQEHYISKL.

The protein belongs to the chordopoxvirinae A6 family.

The protein resides in the virion. Its function is as follows. Plays an essential role in immature virion (IV) to mature virion (MV) transition. The polypeptide is Protein A6 homolog (Vertebrata (FPV)).